A 160-amino-acid polypeptide reads, in one-letter code: Phosphopantetheine adenylyltransferase (160 aa).

Threonine 10 is a binding site for substrate. Residues 10 to 11 and histidine 18 contribute to the ATP site; that span reads TF. Substrate-binding residues include lysine 42, leucine 74, and arginine 88. ATP contacts are provided by residues 89–91, glutamate 99, and 124–130; these read GLR and HGFLSST.

It belongs to the bacterial CoaD family. Homohexamer. The cofactor is Mg(2+).

The protein resides in the cytoplasm. The catalysed reaction is (R)-4'-phosphopantetheine + ATP + H(+) = 3'-dephospho-CoA + diphosphate. Its pathway is cofactor biosynthesis; coenzyme A biosynthesis; CoA from (R)-pantothenate: step 4/5. Reversibly transfers an adenylyl group from ATP to 4'-phosphopantetheine, yielding dephospho-CoA (dPCoA) and pyrophosphate. This Aliivibrio fischeri (strain MJ11) (Vibrio fischeri) protein is Phosphopantetheine adenylyltransferase.